Here is a 317-residue protein sequence, read N- to C-terminus: Insulin-like growth factor-binding protein 2 (317 aa).

The N-terminal stretch at Met-1–Ala-33 is a signal peptide. An IGFBP N-terminal domain is found at Val-35 to His-126. Disulfide bonds link Cys-39–Cys-76, Cys-42–Cys-78, Cys-50–Cys-79, Cys-68–Cys-82, Cys-90–Cys-103, and Cys-97–Cys-123. Disordered regions lie at residues His-126–Ser-146 and Gln-190–Pro-218. In terms of domain architecture, Thyroglobulin type-1 spans Arg-216–Cys-298. 3 disulfides stabilise this stretch: Cys-219/Cys-253, Cys-264/Cys-275, and Cys-277/Cys-298. A Cell attachment site motif is present at residues Arg-293–Asp-295.

In terms of assembly, interacts with IGF1. Interacts with IGF2. Interacts (via RGD motif) with integrin alpha5/ITGA5; this interaction induces cell migration, adhesion or apoptosis according to the context. Interacts with PTPRB; this interaction leads to PTPRB dimerization and inactivation. Cleaved by MMP9 leading to release of free IGF2 from IGFBP2-IGF2 complex, which contributes to enhance the motility and the growth of astrocytes. Post-translationally, O-glycosylated.

It localises to the secreted. Its function is as follows. Multifunctional protein that plays a critical role in regulating the availability of IGFs such as IGF1 and IGF2 to their receptors and thereby regulates IGF-mediated cellular processes including proliferation, differentiation, and apoptosis in a cell-type specific manner. Functions coordinately with receptor protein tyrosine phosphatase beta/PTPRB and the IGF1 receptor to regulate IGF1-mediated signaling by stimulating the phosphorylation of PTEN leading to its inactivation and AKT1 activation. Plays a positive role in cell migration via interaction with integrin alpha5/ITGA5 through an RGD motif. Additionally, interaction with ITGA5/ITGB1 enhances the adhesion of endothelial progenitor cells to endothelial cells. Upon mitochondrial damage, facilitates apoptosis with ITGA5 of podocytes, and then activates the phosphorylation of focal adhesion kinase (FAK)-mediated mitochondrial injury. This chain is Insulin-like growth factor-binding protein 2 (IGFBP2), found in Bos taurus (Bovine).